Here is a 1099-residue protein sequence, read N- to C-terminus: MAHLGPTPPPHSLNYKSEDRLSEQDWPAYFKVPCCGVDTSQIESEEAEVDVRERETQRDREPKRARDLTLRDSCTDNSMQFGTRTTTAEPGFMGTWQNADTNLLFRMSQQAIRCTLVNCTCECFQPGKINLRTCDQCKHGWVAHALDKLSTQHLYHPTQVEIVQSNVVFDISSLMLYGTQAVPVRLKILLDRLFSVLKQEEVLHILHGLGWTLRDYVRGYILQDAAGKVLDRWAIMSREEEIITLQQFLRFGETKSIVELMAIQEKEGQAVAVPSSKTDSDIRTFIESNNRTRSPSLLAHLENSNPSSIHHFENIPNSLAFLLPFQYINPVSAPLLGLPPNGLLLEQPGLRLREPSLSTQNEYNESSESEVSPTPYKNDQTPNRNALTSITNVEPKTEPACVSPIQNSAPVSDLTKTEHPKSSFRIHRMRRMGSASRKGRVFCNACGKTFYDKGTLKIHYNAVHLKIKHRCTIEGCNMVFSSLRSRNRHSANPNPRLHMPMLRNNRDKDLIRATSGAATPVIASTKSNLALTSPGRPPMGFTTPPLDPVLQNPLPSQLVFSGLKTVQPVPPFYRSLLTPGEMVSPPTSLPTSPIIPTSGTIEQHPPPPSEPVVPAVMMATHEPSADLAPKKKPRKSSMPVKIEKEIIDTADEFDDEDDDPNDGGAVVNDMSHDNHCHSQEEMSPGMSVKDFSKHNRTRCISRTEIRRADSMTSEDQEPERDYENESESSEPKLGEESMEGDEHIHSEVSEKVLMNSERPDENHSEPSHQDVIKVKEEFTDPTYDMFYMSQYGLYNGGGASMAALHESFTSSLNYGSPQKFSPEGDLCSSPDPKICYVCKKSFKSSYSVKLHYRNVHLKEMHVCTVAGCNAAFPSRRSRDRHSANINLHRKLLTKELDDMGLDSSQPSLSKDLRDEFLVKIYGAQHPMGLDVREDASSPAGTEDSHLNGYGRGMAEDYMVLDLSTTSSLQSSSSIHSSRESDAGSDEGILLDDIDGASDSGESAHKAEAPALPGSLGAEVSGSLMFSSLSGSNGGIMCNICHKMYSNKGTLRVHYKTVHLREMHKCKVPGCNMMFSSVRSRNRHSQNPNLHKNIPFTSVD.

The disordered stretch occupies residues 45–66 (EEAEVDVRERETQRDREPKRAR). Positions 49 to 66 (VDVRERETQRDREPKRAR) are enriched in basic and acidic residues. A Glycyl lysine isopeptide (Lys-Gly) (interchain with G-Cter in SUMO2) cross-link involves residue K277. The tract at residues 357 to 385 (LSTQNEYNESSESEVSPTPYKNDQTPNRN) is disordered. The span at 361 to 372 (NEYNESSESEVS) shows a compositional bias: low complexity. Polar residues predominate over residues 375–385 (PYKNDQTPNRN). Residues K396, K416, and K421 each participate in a glycyl lysine isopeptide (Lys-Gly) (interchain with G-Cter in SUMO2) cross-link. The interval 397–423 (TEPACVSPIQNSAPVSDLTKTEHPKSS) is disordered. The C2H2-type 1 zinc finger occupies 441 to 464 (VFCNACGKTFYDKGTLKIHYNAVH). Position 561 is a phosphoserine (S561). 2 disordered regions span residues 622 to 641 (EPSADLAPKKKPRKSSMPVK) and 648 to 742 (DTAD…EGDE). K641 participates in a covalent cross-link: Glycyl lysine isopeptide (Lys-Gly) (interchain with G-Cter in SUMO2). A compositionally biased stretch (acidic residues) spans 648–661 (DTADEFDDEDDDPN). Basic and acidic residues-rich tracts occupy residues 670-680 (MSHDNHCHSQE) and 719-742 (ERDYENESESSEPKLGEESMEGDE). A C2H2-type 2 zinc finger spans residues 833 to 856 (KICYVCKKSFKSSYSVKLHYRNVH). Glycyl lysine isopeptide (Lys-Gly) (interchain with G-Cter in SUMO2) cross-links involve residues K894 and K919. 2 disordered regions span residues 929-948 (LDVREDASSPAGTEDSHLNG) and 968-1008 (LQSS…KAEA). A compositionally biased stretch (acidic residues) spans 982–995 (AGSDEGILLDDIDG). C2H2-type zinc fingers lie at residues 1035–1058 (IMCNICHKMYSNKGTLRVHYKTVH) and 1063–1090 (HKCKVPGCNMMFSSVRSRNRHSQNPNLH). The disordered stretch occupies residues 1079–1099 (SRNRHSQNPNLHKNIPFTSVD).

In terms of tissue distribution, highly expressed in testis, uterus and small intestine, and weakly expressed in colon and prostate. Also expressed in skin, primary keratinocytes, immortalized keratinocytes, and HeLa and HEK293 cells. Not detected in blood, thymus, spleen or Hep-G2 cells.

Its subcellular location is the nucleus. In terms of biological role, probable transcription factor specific for skin keratinocytes. May play a role in the differentiation of spermatozoa and oocytes. May also play an important role in early urinary-tract development. The protein is Zinc finger protein basonuclin-2 of Homo sapiens (Human).